A 316-amino-acid polypeptide reads, in one-letter code: MDQNNSLPPYAQGLASPQGAMTPGIPIFSPMMPYGTGLTPQPIQNTNSLSILEEQQRQQQQQQQQQQQQQAVATAAASVQQSTSQQPTQGASGQTPQLFHSQTLTTAPLPGTTPLYPSPMTPMTPITPATPASESSGIVPQLQNIVSTVNLGCKLDLKTIALRARNAEYNPKRFAAVIMRIREPRTTALIFSSGKMVCTGAKSEEQSRLAARKYARVVQKLGFPAKFLDFKIQNMVGSCDVKFPIRLEGLVLTHQQFSSYEPELFPGLIYRMIKPRIVLLIFVSGKVVLTGAKVRAEIYEAFENIYPILKGFRKTT.

Disordered regions lie at residues 1-21 and 104-135; these read MDQN…QGAM and LTTA…ASES. Low complexity-rich tracts occupy residues 104 to 115 and 123 to 133; these read LTTAPLPGTTPL and MTPITPATPAS. 2 repeat units span residues 142–218 and 232–309. The DNA site is built by Asn144, Arg180, Lys195, Asn234, and Arg271.

The protein belongs to the TBP family. Binds DNA as monomer. Belongs to the TFIID complex together with the TBP-associated factors (TAFs). Part of a TFIID-containing RNA polymerase II pre-initiation complex that is composed of TBP and at least GTF2A1, GTF2A2, GTF2E1, GTF2E2, GTF2F1, GTF2H2, GTF2H3, GTF2H4, GTF2H5, GTF2B, TCEA1, ERCC2, ERCC3, TAF1, TAF2, TAF3, TAF4, TAF5, TAF6, TAF7, TAF8, TAF9, TAF10, TAF11, TAF12 and TAF13. Component of the transcription factor SL1/TIF-IB complex, composed of TBP and at least TAF1A, TAF1B, TAF1C and TAF1D. Association of TBP to form either TFIID or SL1/TIF-IB appears to be mutually exclusive. Interacts with TAF1A, TAF1B and TAF1C. Interacts with TFIIB, NCOA6, DRAP1, DR1 and ELF3. Interacts with SPIB, SNAPC1, SNAPC2 and SNAPC4. Interacts with UTF1. Interacts with BRF2; this interaction promotes recruitment of BRF2 to TATA box-containing promoters. Interacts with UBTF. Interacts with GPBP1. Interacts with CITED2. Interacts with ATF7IP. Interacts with LLPH. Interacts with HSF1 (via transactivation domain). Interacts with GTF2B (via C-terminus); this interaction with promoter-bound TBP guides RNA polymerase II into the pre-initiation complex (PIC). Interacts with PAX5. Interacts with MSX1; the interaction may inhibit MSX1 autoinactivation. Interacts with MSX3. In terms of tissue distribution, ubiquitously expressed.

The protein localises to the nucleus. In terms of biological role, general transcription factor that functions at the core of the DNA-binding multiprotein factor TFIID. Binding of TFIID to the TATA box is the initial transcriptional step of the pre-initiation complex (PIC), playing a role in the activation of eukaryotic genes transcribed by RNA polymerase II. Component of a BRF2-containing transcription factor complex that regulates transcription mediated by RNA polymerase III. Component of the transcription factor SL1/TIF-IB complex, which is involved in the assembly of the PIC (pre-initiation complex) during RNA polymerase I-dependent transcription. The rate of PIC formation probably is primarily dependent on the rate of association of SL1 with the rDNA promoter. SL1 is involved in stabilization of nucleolar transcription factor 1/UBTF on rDNA. This is TATA-box-binding protein (Tbp) from Mus musculus (Mouse).